We begin with the raw amino-acid sequence, 440 residues long: tRNA(Ile)-lysidine synthase (440 aa).

29 to 34 (SGGLDS) is an ATP binding site.

Belongs to the tRNA(Ile)-lysidine synthase family.

The protein localises to the cytoplasm. It carries out the reaction cytidine(34) in tRNA(Ile2) + L-lysine + ATP = lysidine(34) in tRNA(Ile2) + AMP + diphosphate + H(+). Functionally, ligates lysine onto the cytidine present at position 34 of the AUA codon-specific tRNA(Ile) that contains the anticodon CAU, in an ATP-dependent manner. Cytidine is converted to lysidine, thus changing the amino acid specificity of the tRNA from methionine to isoleucine. This is tRNA(Ile)-lysidine synthase from Pectobacterium atrosepticum (strain SCRI 1043 / ATCC BAA-672) (Erwinia carotovora subsp. atroseptica).